The primary structure comprises 447 residues: Phosphoglucosamine mutase (447 aa).

The active-site Phosphoserine intermediate is the serine 88. Mg(2+) contacts are provided by serine 88, aspartate 231, aspartate 233, and aspartate 235. Serine 88 is subject to Phosphoserine.

Belongs to the phosphohexose mutase family. It depends on Mg(2+) as a cofactor. In terms of processing, activated by phosphorylation.

It carries out the reaction alpha-D-glucosamine 1-phosphate = D-glucosamine 6-phosphate. In terms of biological role, catalyzes the conversion of glucosamine-6-phosphate to glucosamine-1-phosphate. This chain is Phosphoglucosamine mutase, found in Methanococcus maripaludis (strain C7 / ATCC BAA-1331).